The following is a 579-amino-acid chain: Probable cholinesterase (579 aa).

The N-terminal stretch at Met-1 to Ala-19 is a signal peptide. 2 N-linked (GlcNAc...) asparagine; by host glycosylation sites follow: Asn-77 and Asn-144. Ser-217 functions as the Acyl-ester intermediate in the catalytic mechanism. N-linked (GlcNAc...) asparagine; by host glycosylation is found at Asn-257, Asn-269, and Asn-283. The active-site Charge relay system is the Glu-337. 2 N-linked (GlcNAc...) asparagine; by host glycosylation sites follow: Asn-373 and Asn-394. His-451 (charge relay system) is an active-site residue. N-linked (GlcNAc...) asparagine; by host glycosylation is present at Asn-469.

It belongs to the type-B carboxylesterase/lipase family.

It carries out the reaction an acylcholine + H2O = a carboxylate + choline + H(+). Its function is as follows. May be involved in the disruption of the host membrane. This is Probable cholinesterase from Acanthamoeba polyphaga mimivirus (APMV).